A 1153-amino-acid polypeptide reads, in one-letter code: Nitric oxide synthase (1153 aa).

Serine 3 is a binding site for (6R)-L-erythro-5,6,7,8-tetrahydrobiopterin. Cysteine 82 is a heme b binding site. 3 residues coordinate L-arginine: glutamine 145, tryptophan 254, and asparagine 264. Phenylalanine 358 contributes to the (6R)-L-erythro-5,6,7,8-tetrahydrobiopterin binding site. A calmodulin-binding region spans residues 397–417; sequence PKRKLGFKALARAVEFSASLM. In terms of domain architecture, Flavodoxin-like spans 427-610; it reads CSIFYATETG…SFRAWSEEVF (184 aa). An FMN-binding site is contributed by 556–587; that stretch reads VFGLGSKAYPYYAAYGKYIYLMLQELGAERLV. One can recognise an FAD-binding FR-type domain in the interval 660–903; that stretch reads KEVMPLILAE…LRSAPHFHLP (244 aa). FAD contacts are provided by residues 697 to 708 and 836 to 846; these read YAPGDHVAIFPA and LQPRYYSISSS. 911–929 serves as a coordination point for NADP(+); that stretch reads IMIGPGSGIAPFRSFWQQR. 11 repeat units span residues 934–940, 941–947, 948–954, 955–961, 962–968, 969–975, 976–982, 983–989, 990–996, 997–1003, and 1004–1010. The 11 X 7 AA tandem repeats of E-[NTR]-[ST]-[IM]-[PLQ]-[SP]-[CW] stretch occupies residues 934-1010; it reads ENTMPSCENT…PSWERTMQPC (77 aa). 1089-1104 contributes to the NADP(+) binding site; it reads GGHFYVSGDVSMAHDV.

It belongs to the NOS family. The cofactor is heme b. FAD serves as cofactor. It depends on FMN as a cofactor. In terms of tissue distribution, expressed in the central nervous system, in the serotonergic cerebral giant cells. The isoform Long and isoform Short are expressed equally in the CNS.

The catalysed reaction is 2 L-arginine + 3 NADPH + 4 O2 + H(+) = 2 L-citrulline + 2 nitric oxide + 3 NADP(+) + 4 H2O. With respect to regulation, stimulated by calcium/calmodulin. Produces nitric oxide (NO) which is a messenger molecule with diverse functions throughout the body. In Lymnaea stagnalis (Great pond snail), this protein is Nitric oxide synthase (NOS).